The sequence spans 639 residues: Extracellular metalloproteinase mep (639 aa).

The signal sequence occupies residues 1 to 16; it reads MHMLSFIGALALPVFV. A propeptide spanning residues 17–245 is cleaved from the precursor; the sequence is CAQSCEPASL…IHGVVDYISE (229 aa). 4 N-linked (GlcNAc...) asparagine glycosylation sites follow: Asn287, Asn320, Asn336, and Asn368. His429 is a Zn(2+) binding site. The active site involves Glu430. His433 serves as a coordination point for Zn(2+). N-linked (GlcNAc...) asparagine glycosylation occurs at Asn509.

This sequence belongs to the peptidase M36 family. The cofactor is Zn(2+).

It is found in the secreted. In terms of biological role, secreted metalloproteinase that allows assimilation of proteinaceous substrates. In Aspergillus flavus (strain ATCC 200026 / FGSC A1120 / IAM 13836 / NRRL 3357 / JCM 12722 / SRRC 167), this protein is Extracellular metalloproteinase mep (mep).